We begin with the raw amino-acid sequence, 196 residues long: MISLFKKLYFTFSRSSRIIITLVIIDQLTKWWFINNLRWKPGLMLKVTSILNMVYTWNYGISFGLMREYYQYSNAIFLITNMIIVCYLYHLMICSKTIGSFVGYNFVIGGAIGNLIDRFCRGAVFDFIHFHYRNYSFPVFNLADCFITLGVIILIEDYFSTKKVIEETSKENFDNLQIEAMAAKIRNTDHVSNDKI.

A run of 3 helical transmembrane segments spans residues 43–63, 75–95, and 97–117; these read LMLKVTSILNMVYTWNYGISF, AIFLITNMIIVCYLYHLMICS, and TIGSFVGYNFVIGGAIGNLID. Residues Asp126 and Asp144 contribute to the active site. A helical membrane pass occupies residues 135 to 155; it reads YSFPVFNLADCFITLGVIILI.

It belongs to the peptidase A8 family.

It is found in the cell inner membrane. It catalyses the reaction Release of signal peptides from bacterial membrane prolipoproteins. Hydrolyzes -Xaa-Yaa-Zaa-|-(S,diacylglyceryl)Cys-, in which Xaa is hydrophobic (preferably Leu), and Yaa (Ala or Ser) and Zaa (Gly or Ala) have small, neutral side chains.. It participates in protein modification; lipoprotein biosynthesis (signal peptide cleavage). In terms of biological role, this protein specifically catalyzes the removal of signal peptides from prolipoproteins. The protein is Lipoprotein signal peptidase of Rickettsia typhi (strain ATCC VR-144 / Wilmington).